The chain runs to 267 residues: Chaperone protein MyfB (267 aa).

A signal peptide spans 1–34; the sequence is MKYKFSHNFISYNLFLFVFMSLILLPYSHASSMG. A disulfide bridge links cysteine 127 with cysteine 164.

Belongs to the periplasmic pilus chaperone family.

The protein localises to the periplasm. In terms of biological role, required for the biogenesis of the MyfA fimbria. This chain is Chaperone protein MyfB (myfB), found in Yersinia enterocolitica.